Consider the following 358-residue polypeptide: DNA polymerase IV (358 aa).

Positions 4-185 constitute a UmuC domain; sequence IIHIDMDCYF…LSLRKIPGVG (182 aa). Residues Asp-8 and Asp-103 each contribute to the Mg(2+) site. Glu-104 is a catalytic residue.

Belongs to the DNA polymerase type-Y family. As to quaternary structure, monomer. The cofactor is Mg(2+).

The protein resides in the cytoplasm. It carries out the reaction DNA(n) + a 2'-deoxyribonucleoside 5'-triphosphate = DNA(n+1) + diphosphate. Its function is as follows. Poorly processive, error-prone DNA polymerase involved in untargeted mutagenesis. Copies undamaged DNA at stalled replication forks, which arise in vivo from mismatched or misaligned primer ends. These misaligned primers can be extended by PolIV. Exhibits no 3'-5' exonuclease (proofreading) activity. May be involved in translesional synthesis, in conjunction with the beta clamp from PolIII. This Shewanella baltica (strain OS185) protein is DNA polymerase IV.